The primary structure comprises 541 residues: Glutamyl-tRNA(Gln) amidotransferase subunit B, mitochondrial (541 aa).

This sequence belongs to the GatB/GatE family. GatB subfamily. Subunit of the heterotrimeric GatFAB amidotransferase (AdT) complex, composed of A, B and F subunits.

Its subcellular location is the mitochondrion. The enzyme catalyses L-glutamyl-tRNA(Gln) + L-glutamine + ATP + H2O = L-glutaminyl-tRNA(Gln) + L-glutamate + ADP + phosphate + H(+). Functionally, allows the formation of correctly charged Gln-tRNA(Gln) through the transamidation of misacylated Glu-tRNA(Gln) in the mitochondria. The reaction takes place in the presence of glutamine and ATP through an activated gamma-phospho-Glu-tRNA(Gln). The sequence is that of Glutamyl-tRNA(Gln) amidotransferase subunit B, mitochondrial from Saccharomyces cerevisiae (strain RM11-1a) (Baker's yeast).